The primary structure comprises 364 residues: Flagellar P-ring protein (364 aa).

The signal sequence occupies residues 1–29 (MKTIGGKVFRHAAILAACVLPLWCQPALA).

This sequence belongs to the FlgI family. In terms of assembly, the basal body constitutes a major portion of the flagellar organelle and consists of four rings (L,P,S, and M) mounted on a central rod.

Its subcellular location is the periplasm. It is found in the bacterial flagellum basal body. In terms of biological role, assembles around the rod to form the L-ring and probably protects the motor/basal body from shearing forces during rotation. This is Flagellar P-ring protein from Dechloromonas aromatica (strain RCB).